The primary structure comprises 559 residues: Glucans biosynthesis protein G (559 aa).

A signal peptide spans 1-37; the sequence is MVSLLSCGTSASSHIVKKALTRLSLAMAAGLCFNLAA.

It belongs to the OpgD/OpgG family.

The protein resides in the periplasm. The protein operates within glycan metabolism; osmoregulated periplasmic glucan (OPG) biosynthesis. Involved in the biosynthesis of osmoregulated periplasmic glucans (OPGs). The protein is Glucans biosynthesis protein G of Shewanella frigidimarina (strain NCIMB 400).